We begin with the raw amino-acid sequence, 286 residues long: UPF0761 membrane protein KPN78578_41360 (286 aa).

The next 7 membrane-spanning stretches (helical) occupy residues 44–64 (LLSL…FPMF), 74–94 (FIFA…IEQF), 104–124 (VGAF…DSAL), 140–160 (FAVY…SLAI), 183–203 (LFPL…VPTT), 210–230 (AVIG…AFAL), and 244–264 (VISV…IVLL).

It belongs to the UPF0761 family.

The protein localises to the cell inner membrane. The polypeptide is UPF0761 membrane protein KPN78578_41360 (Klebsiella pneumoniae subsp. pneumoniae (strain ATCC 700721 / MGH 78578)).